The sequence spans 493 residues: 1-aminocyclopropane-1-carboxylate synthase CMW33 (493 aa).

At Lys-279 the chain carries N6-(pyridoxal phosphate)lysine.

This sequence belongs to the class-I pyridoxal-phosphate-dependent aminotransferase family. As to quaternary structure, homodimer. The cofactor is pyridoxal 5'-phosphate.

It catalyses the reaction S-adenosyl-L-methionine = 1-aminocyclopropane-1-carboxylate + S-methyl-5'-thioadenosine + H(+). It participates in alkene biosynthesis; ethylene biosynthesis via S-adenosyl-L-methionine; ethylene from S-adenosyl-L-methionine: step 1/2. Catalyzes the formation of 1-aminocyclopropane-1-carboxylate, a direct precursor of ethylene in higher plants. The polypeptide is 1-aminocyclopropane-1-carboxylate synthase CMW33 (ACS1) (Cucurbita maxima (Pumpkin)).